The following is an 824-amino-acid chain: uncharacterized protein (824 aa).

This is an uncharacterized protein from Caenorhabditis elegans.